The following is a 91-amino-acid chain: Small ribosomal subunit protein bS20 (91 aa).

A disordered region spans residues methionine 1–alanine 23.

Belongs to the bacterial ribosomal protein bS20 family.

Functionally, binds directly to 16S ribosomal RNA. This is Small ribosomal subunit protein bS20 from Rhizobium rhizogenes (strain K84 / ATCC BAA-868) (Agrobacterium radiobacter).